A 168-amino-acid chain; its full sequence is Sec-independent protein translocase protein TatB (168 aa).

A helical transmembrane segment spans residues M1 to G21. 2 disordered regions span residues F92–R132 and V146–E168. Over residues G94 to G107 the composition is skewed to low complexity. Residues K117–R126 show a composition bias toward basic residues.

The protein belongs to the TatB family. The Tat system comprises two distinct complexes: a TatABC complex, containing multiple copies of TatA, TatB and TatC subunits, and a separate TatA complex, containing only TatA subunits. Substrates initially bind to the TatABC complex, which probably triggers association of the separate TatA complex to form the active translocon.

It is found in the cell inner membrane. Its function is as follows. Part of the twin-arginine translocation (Tat) system that transports large folded proteins containing a characteristic twin-arginine motif in their signal peptide across membranes. Together with TatC, TatB is part of a receptor directly interacting with Tat signal peptides. TatB may form an oligomeric binding site that transiently accommodates folded Tat precursor proteins before their translocation. This chain is Sec-independent protein translocase protein TatB, found in Cupriavidus metallidurans (strain ATCC 43123 / DSM 2839 / NBRC 102507 / CH34) (Ralstonia metallidurans).